Here is a 155-residue protein sequence, read N- to C-terminus: SsrA-binding protein (155 aa).

This sequence belongs to the SmpB family.

It is found in the cytoplasm. Functionally, required for rescue of stalled ribosomes mediated by trans-translation. Binds to transfer-messenger RNA (tmRNA), required for stable association of tmRNA with ribosomes. tmRNA and SmpB together mimic tRNA shape, replacing the anticodon stem-loop with SmpB. tmRNA is encoded by the ssrA gene; the 2 termini fold to resemble tRNA(Ala) and it encodes a 'tag peptide', a short internal open reading frame. During trans-translation Ala-aminoacylated tmRNA acts like a tRNA, entering the A-site of stalled ribosomes, displacing the stalled mRNA. The ribosome then switches to translate the ORF on the tmRNA; the nascent peptide is terminated with the 'tag peptide' encoded by the tmRNA and targeted for degradation. The ribosome is freed to recommence translation, which seems to be the essential function of trans-translation. The polypeptide is SsrA-binding protein (Streptococcus equi subsp. zooepidemicus (strain MGCS10565)).